A 347-amino-acid polypeptide reads, in one-letter code: 4-hydroxy-tetrahydrodipicolinate reductase 1, chloroplastic (347 aa).

The transit peptide at 1 to 51 (MATNGLMASSSVFLHRPRIAFASRTNQTVGKYGKGRVSFMGIGTRRLPVVL) directs the protein to the chloroplast. Ser-52 carries the post-translational modification N-acetylserine. Residues 79–84 (GCSGKM), 171–173 (GTT), and 194–197 (SPQM) each bind NAD(+). The Proton donor/acceptor role is filled by His-230. Lys-234 acts as the Proton donor in catalysis. Residue 239–240 (GT) participates in (S)-2,3,4,5-tetrahydrodipicolinate binding.

This sequence belongs to the DapB family.

The protein localises to the plastid. Its subcellular location is the chloroplast. The catalysed reaction is (S)-2,3,4,5-tetrahydrodipicolinate + NAD(+) + H2O = (2S,4S)-4-hydroxy-2,3,4,5-tetrahydrodipicolinate + NADH + H(+). The enzyme catalyses (S)-2,3,4,5-tetrahydrodipicolinate + NADP(+) + H2O = (2S,4S)-4-hydroxy-2,3,4,5-tetrahydrodipicolinate + NADPH + H(+). Its pathway is amino-acid biosynthesis; L-lysine biosynthesis via DAP pathway; (S)-tetrahydrodipicolinate from L-aspartate: step 4/4. Catalyzes the conversion of 4-hydroxy-tetrahydrodipicolinate (HTPA) to tetrahydrodipicolinate. This is 4-hydroxy-tetrahydrodipicolinate reductase 1, chloroplastic (DAPB1) from Arabidopsis thaliana (Mouse-ear cress).